The chain runs to 284 residues: Undecaprenyl-diphosphatase 2 (284 aa).

7 consecutive transmembrane segments (helical) span residues 6–26, 46–66, 94–114, 119–139, 183–203, 227–247, and 262–282; these read VIFILKSVIIAIVEGLTEFIP, FAEMFEVVIQLGAILAVVVLY, FGMNVIIGCIPFAIIGVLFYD, LFNLQSVIIGFIVGGILLLVV, IMGGWIAGLNSPTAAEFSFFL, TLWIALVVGFIVAFIVSIIVM, and FAVYRIIMGVVLAVLAFTNII.

Belongs to the UppP family.

The protein resides in the cell membrane. The enzyme catalyses di-trans,octa-cis-undecaprenyl diphosphate + H2O = di-trans,octa-cis-undecaprenyl phosphate + phosphate + H(+). In terms of biological role, catalyzes the dephosphorylation of undecaprenyl diphosphate (UPP). Confers resistance to bacitracin. The sequence is that of Undecaprenyl-diphosphatase 2 from Clostridioides difficile (strain 630) (Peptoclostridium difficile).